A 277-amino-acid chain; its full sequence is Cation-dependent mannose-6-phosphate receptor (277 aa).

An N-terminal signal peptide occupies residues 1–26 (MFPFYSCWRTGLLLLLLAVAVRESWQ). At 27-185 (TEEKTCDLVG…SLACSPEISH (159 aa)) the chain is on the lumenal side. The 152-residue stretch at 30-181 (KTCDLVGEKG…EMDSSLACSP (152 aa)) folds into the MRH domain. The cysteines at positions 32 and 78 are disulfide-linked. Residues asparagine 57, asparagine 83, asparagine 94, asparagine 107, and asparagine 113 are each glycosylated (N-linked (GlcNAc...) asparagine). Cystine bridges form between cysteine 132–cysteine 167 and cysteine 145–cysteine 179. A helical transmembrane segment spans residues 186–210 (LSVGSILLVTFASLVAVYVVGGFLY). Over 211 to 277 (QRLVVGAKGM…EERDDHLLPM (67 aa)) the chain is Cytoplasmic. Residues 256 to 277 (RGVGDDQLGEESEERDDHLLPM) form a disordered region. Serine 267 is modified (phosphoserine).

As to quaternary structure, homodimer. Binds GGA1, GGA2 and GGA3.

Its subcellular location is the lysosome membrane. In terms of biological role, transport of phosphorylated lysosomal enzymes from the Golgi complex and the cell surface to lysosomes. Lysosomal enzymes bearing phosphomannosyl residues bind specifically to mannose-6-phosphate receptors in the Golgi apparatus and the resulting receptor-ligand complex is transported to an acidic prelyosomal compartment where the low pH mediates the dissociation of the complex. The sequence is that of Cation-dependent mannose-6-phosphate receptor (M6PR) from Homo sapiens (Human).